The chain runs to 544 residues: Probable protein kinase UbiB (544 aa).

In terms of domain architecture, Protein kinase spans 123 to 501 (EFDIKPLASA…KRQQATGKFL (379 aa)). ATP is bound by residues 129-137 (LASASIAQV) and K152. D287 (proton acceptor) is an active-site residue. Transmembrane regions (helical) follow at residues 496–516 (ATGK…AILV) and 519–539 (AYEQ…LLSW).

This sequence belongs to the ABC1 family. UbiB subfamily.

It is found in the cell inner membrane. It participates in cofactor biosynthesis; ubiquinone biosynthesis [regulation]. Functionally, is probably a protein kinase regulator of UbiI activity which is involved in aerobic coenzyme Q (ubiquinone) biosynthesis. The polypeptide is Probable protein kinase UbiB (Vibrio parahaemolyticus serotype O3:K6 (strain RIMD 2210633)).